A 78-amino-acid chain; its full sequence is Large ribosomal subunit protein bL28 (78 aa).

This sequence belongs to the bacterial ribosomal protein bL28 family.

The polypeptide is Large ribosomal subunit protein bL28 (Flavobacterium psychrophilum (strain ATCC 49511 / DSM 21280 / CIP 103535 / JIP02/86)).